We begin with the raw amino-acid sequence, 503 residues long: MLLEVLNPRHYNVTSMVSEVVPIASIAILLLTGFLLLVWNYEDTSSIPGPSYFLGIGPLISHCRFLWMGIGSACNYYNKMYGEFMRVWVCGEETLIISKSSSMFHVMKHSHYISRFGSKLGLQFIGMHEKGIIFNNNPALWKAVRPFFTKALSGPGLVRMVTICADSITKHLDRLEEVCNDLGYVDVLTLMRRIMLDTSNMLFLGIPLDESAIVVKIQGYFDAWQALLLKPDIFFKISWLCRKYEKSVKDLKDAMEILIEEKRHRISTAEKLEDSIDFATELIFAEKRGELTRENVNQCILEMLIAAPDTMSVSVFFMLFLIAKHPQVEEAIIREIQTVVGERDIRIDDMQKLKVVENFINESMRYQPVVDLVMRKALEDDVIDGYPVKKGTNIILNLGRMHRLEFFPKPNEFTLENFAKNVPYRYFQPFGFGPRACAGKYITMVMMKVVLVTLLRRFHVQTLQGRCVEKMQKKNDLSLHPDETRDRLEMIFTPRNSDKCLER.

2 consecutive transmembrane segments (helical) span residues 19-39 (EVVPIASIAILLLTGFLLLVW) and 53-73 (FLGIGPLISHCRFLWMGIGSA). Residues D309 and M374 each coordinate substrate. Position 437 (C437) interacts with heme.

It belongs to the cytochrome P450 family. Heme serves as cofactor.

It localises to the endoplasmic reticulum membrane. The protein resides in the microsome membrane. The catalysed reaction is testosterone + 3 reduced [NADPH--hemoprotein reductase] + 3 O2 = 17beta-estradiol + formate + 3 oxidized [NADPH--hemoprotein reductase] + 4 H2O + 4 H(+). It catalyses the reaction androst-4-ene-3,17-dione + 3 reduced [NADPH--hemoprotein reductase] + 3 O2 = estrone + formate + 3 oxidized [NADPH--hemoprotein reductase] + 4 H2O + 4 H(+). It carries out the reaction androst-4-ene-3,17-dione + reduced [NADPH--hemoprotein reductase] + O2 = 19-hydroxyandrost-4-ene-3,17-dione + oxidized [NADPH--hemoprotein reductase] + H2O + H(+). The enzyme catalyses 19-hydroxyandrost-4-ene-3,17-dione + reduced [NADPH--hemoprotein reductase] + O2 = 19-oxo-androst-4-ene-3,17-dione + oxidized [NADPH--hemoprotein reductase] + 2 H2O + H(+). The catalysed reaction is 19-oxo-androst-4-ene-3,17-dione + reduced [NADPH--hemoprotein reductase] + O2 = estrone + formate + oxidized [NADPH--hemoprotein reductase] + H2O + 2 H(+). It catalyses the reaction estrone + reduced [NADPH--hemoprotein reductase] + O2 = 2-hydroxyestrone + oxidized [NADPH--hemoprotein reductase] + H2O + H(+). It carries out the reaction 17beta-hydroxy-5alpha-androstan-3-one + reduced [NADPH--hemoprotein reductase] + O2 = 17beta,19-dihydroxy-3-oxo-5alpha-androstanone + oxidized [NADPH--hemoprotein reductase] + H2O + H(+). The enzyme catalyses 17beta,19-dihydroxy-3-oxo-5alpha-androstanone + reduced [NADPH--hemoprotein reductase] + O2 = 17beta-hydroxy-3,19-dioxo-5alpha-androstanone + oxidized [NADPH--hemoprotein reductase] + 2 H2O + H(+). The catalysed reaction is 17beta-hydroxy-3,19-dioxo-5alpha-androstanone + reduced [NADPH--hemoprotein reductase] + O2 = 17beta-hydroxy-3-oxo-19-nor-5alpha-androst-1-ene + formate + oxidized [NADPH--hemoprotein reductase] + H2O + 2 H(+). It functions in the pathway steroid hormone biosynthesis. Its function is as follows. A cytochrome P450 monooxygenase that catalyzes the conversion of C19 androgens, androst-4-ene-3,17-dione (androstenedione) and testosterone to the C18 estrogens, estrone and estradiol, respectively. Catalyzes three successive oxidations of C19 androgens: two conventional oxidations at C19 yielding 19-hydroxy and 19-oxo/19-aldehyde derivatives, followed by a third oxidative aromatization step that involves C1-beta hydrogen abstraction combined with cleavage of the C10-C19 bond to yield a phenolic A ring and formic acid. Alternatively, the third oxidative reaction yields a 19-norsteroid and formic acid. Converts dihydrotestosterone to delta1,10-dehydro 19-nordihydrotestosterone and may play a role in homeostasis of this potent androgen. Also displays 2-hydroxylase activity toward estrone. Mechanistically, uses molecular oxygen inserting one oxygen atom into a substrate, and reducing the second into a water molecule, with two electrons provided by NADPH via cytochrome P450 reductase (CPR; NADPH-ferrihemoprotein reductase). The protein is Aromatase (CYP19A1) of Bos taurus (Bovine).